Consider the following 153-residue polypeptide: 6,7-dimethyl-8-ribityllumazine synthase (153 aa).

5-amino-6-(D-ribitylamino)uracil contacts are provided by residues Phe22, 56–58, and 80–82; these read AFE and TVI. 85–86 provides a ligand contact to (2S)-2-hydroxy-3-oxobutyl phosphate; it reads AT. The active-site Proton donor is the His88. Position 113 (Phe113) interacts with 5-amino-6-(D-ribitylamino)uracil. A (2S)-2-hydroxy-3-oxobutyl phosphate-binding site is contributed by Arg127.

It belongs to the DMRL synthase family.

It carries out the reaction (2S)-2-hydroxy-3-oxobutyl phosphate + 5-amino-6-(D-ribitylamino)uracil = 6,7-dimethyl-8-(1-D-ribityl)lumazine + phosphate + 2 H2O + H(+). The protein operates within cofactor biosynthesis; riboflavin biosynthesis; riboflavin from 2-hydroxy-3-oxobutyl phosphate and 5-amino-6-(D-ribitylamino)uracil: step 1/2. In terms of biological role, catalyzes the formation of 6,7-dimethyl-8-ribityllumazine by condensation of 5-amino-6-(D-ribitylamino)uracil with 3,4-dihydroxy-2-butanone 4-phosphate. This is the penultimate step in the biosynthesis of riboflavin. In Clostridium perfringens (strain ATCC 13124 / DSM 756 / JCM 1290 / NCIMB 6125 / NCTC 8237 / Type A), this protein is 6,7-dimethyl-8-ribityllumazine synthase.